Reading from the N-terminus, the 616-residue chain is Chaperone protein HscA homolog (616 aa).

It belongs to the heat shock protein 70 family.

In terms of biological role, chaperone involved in the maturation of iron-sulfur cluster-containing proteins. Has a low intrinsic ATPase activity which is markedly stimulated by HscB. The polypeptide is Chaperone protein HscA homolog (Mannheimia succiniciproducens (strain KCTC 0769BP / MBEL55E)).